The primary structure comprises 178 residues: Probable chorismate pyruvate-lyase (178 aa).

Substrate contacts are provided by Arg67, Leu105, and Glu164.

The protein belongs to the UbiC family.

Its subcellular location is the cytoplasm. It carries out the reaction chorismate = 4-hydroxybenzoate + pyruvate. It functions in the pathway cofactor biosynthesis; ubiquinone biosynthesis. Functionally, removes the pyruvyl group from chorismate, with concomitant aromatization of the ring, to provide 4-hydroxybenzoate (4HB) for the ubiquinone pathway. The protein is Probable chorismate pyruvate-lyase of Methylobacillus flagellatus (strain ATCC 51484 / DSM 6875 / VKM B-1610 / KT).